We begin with the raw amino-acid sequence, 316 residues long: Polyprenyl transferase ausN (316 aa).

The next 9 helical transmembrane spans lie at V45–L65, V69–I89, G108–S128, L129–L149, L163–P183, I188–Y208, D233–L253, L256–L276, and S296–L316.

This sequence belongs to the UbiA prenyltransferase family. Mg(2+) serves as cofactor.

It is found in the membrane. The catalysed reaction is 3,5-dimethylorsellinate + (2E,6E)-farnesyl diphosphate = (3R)-3-farnesyl-6-hydroxy-2,3,5-trimethyl-4-oxocyclohexa-1,5-diene-1-carboxylate + diphosphate + H(+). Its pathway is secondary metabolite biosynthesis; terpenoid biosynthesis. Polyprenyl transferase; part of the gene cluster A that mediates the biosynthesis of the fungal meroterpenoid acetoxydehydroaustin. The first step of the pathway is the synthesis of 3,5-dimethylorsellinic acid by the polyketide synthase ausA. 3,5-dimethylorsellinic acid is then prenylated by the polyprenyl transferase ausN. Further epoxidation by the FAD-dependent monooxygenase ausM and cyclization by the probable terpene cyclase ausL lead to the formation of protoaustinoid A. Protoaustinoid A is then oxidized to spiro-lactone preaustinoid A3 by the combined action of the FAD-binding monooxygenases ausB and ausC, and the dioxygenase ausE. Acid-catalyzed keto-rearrangement and ring contraction of the tetraketide portion of preaustinoid A3 by ausJ lead to the formation of preaustinoid A4. The aldo-keto reductase ausK, with the help of ausH, is involved in the next step by transforming preaustinoid A4 into isoaustinone which is in turn hydroxylated by the P450 monooxygenase ausI to form austinolide. The cytochrome P450 monooxygenase ausG then modifies austinolide to austinol. Austinol is further acetylated to austin by the O-acetyltransferase ausP, which spontaneously changes to dehydroaustin. The cytochrome P450 monooxygenase then converts dehydroaustin is into 7-dehydrodehydroaustin. The hydroxylation catalyzed by ausR permits the second O-acetyltransferase ausQ to add an additional acetyl group to the molecule, leading to the formation of acetoxydehydroaustin. Due to genetic rearrangements of the clusters and the subsequent loss of some enzymes, the end product of the Penicillium brasilianum austinoid biosynthesis clusters is acetoxydehydroaustin. This chain is Polyprenyl transferase ausN, found in Penicillium brasilianum.